A 422-amino-acid polypeptide reads, in one-letter code: p-hydroxyphenylacetate 3-hydroxylase, oxygenase component (422 aa).

Trp-112 is a binding site for FMN. Positions 120 and 146 each coordinate substrate. Residues 146-148 (SSI) and 169-171 (WSS) contribute to the FMN site. 263–266 (RPYF) contacts substrate. Residues Arg-292, Tyr-296, 374 to 375 (AT), and 396 to 397 (HA) each bind FMN. Residue Tyr-296 coordinates substrate.

Belongs to the HpaH/HsaA monooxygenase family. Homotetramer. The p-hydroxyphenylacetate 3-hydroxylase (HpaH) is composed of an oxygenase component C2 and a reductase component C1.

It carries out the reaction 4-hydroxyphenylacetate + FMNH2 + O2 = 3,4-dihydroxyphenylacetate + FMN + H2O + H(+). The enzyme catalyses 4-hydroxyphenylacetate + FADH2 + O2 = 3,4-dihydroxyphenylacetate + FAD + H2O + H(+). Its pathway is aromatic compound metabolism; 4-hydroxyphenylacetate degradation; pyruvate and succinate semialdehyde from 4-hydroxyphenylacetate: step 1/7. Its activity is regulated as follows. Inhibited by flavin concentrations greater than 15 uM. Also inhibited by excess p-hydroxyphenylacetate (HPA). Functionally, oxygenase component of a two-component system that utilizes reduced FMN (FMNH2) supplied by the reductase component to catalyze the hydroxylation of 4-hydroxyphenylacetic acid, leading to the production of 3,4-dihydroxyphenylacetate (3,4-DHPA). Also utilizes other reduced flavins such as FADH2 and reduced riboflavin to a lesser extent. Only the compounds with a hydroxyl group in the para (p-) position can be hydroxylated. May also oxidize phenol to catechol, and hydroxylate other phenol derivatives. The sequence is that of p-hydroxyphenylacetate 3-hydroxylase, oxygenase component from Acinetobacter baumannii.